The primary structure comprises 414 residues: Small ribosomal subunit protein mS46 (414 aa).

Positions 20 to 35 (LNAQQQQRPFSSTTTR) are enriched in polar residues. 2 disordered regions span residues 20–71 (LNAQ…EAAV) and 168–229 (AGPG…DAPP). Low complexity-rich tracts occupy residues 45-59 (PAAA…APGP) and 168-200 (AGPG…PFGA). A compositionally biased stretch (basic and acidic residues) spans 205 to 224 (PAGDKKRSGGSGDKRPRGDD).

Belongs to the mitochondrion-specific ribosomal protein mS46 family. In terms of assembly, component of the mitochondrial small ribosomal subunit (mt-SSU). Mature N.crassa 74S mitochondrial ribosomes consist of a small (37S) and a large (54S) subunit. The 37S small subunit contains a 16S ribosomal RNA (16S mt-rRNA) and 32 different proteins. The 54S large subunit contains a 23S rRNA (23S mt-rRNA) and 42 different proteins.

It is found in the mitochondrion. Functionally, component of the mitochondrial ribosome (mitoribosome), a dedicated translation machinery responsible for the synthesis of mitochondrial genome-encoded proteins, including at least some of the essential transmembrane subunits of the mitochondrial respiratory chain. The mitoribosomes are attached to the mitochondrial inner membrane and translation products are cotranslationally integrated into the membrane. The sequence is that of Small ribosomal subunit protein mS46 (rsm28) from Neurospora crassa (strain ATCC 24698 / 74-OR23-1A / CBS 708.71 / DSM 1257 / FGSC 987).